Consider the following 489-residue polypeptide: tRNA(Ile)-lysidine synthase (489 aa).

35–40 is a binding site for ATP; it reads SGGLDS.

The protein belongs to the tRNA(Ile)-lysidine synthase family.

It is found in the cytoplasm. The enzyme catalyses cytidine(34) in tRNA(Ile2) + L-lysine + ATP = lysidine(34) in tRNA(Ile2) + AMP + diphosphate + H(+). In terms of biological role, ligates lysine onto the cytidine present at position 34 of the AUA codon-specific tRNA(Ile) that contains the anticodon CAU, in an ATP-dependent manner. Cytidine is converted to lysidine, thus changing the amino acid specificity of the tRNA from methionine to isoleucine. In Burkholderia pseudomallei (strain K96243), this protein is tRNA(Ile)-lysidine synthase.